The sequence spans 797 residues: Ent-atiserene synthase KSL1, chloroplastic (797 aa).

The transit peptide at 1-48 (LVKDDMSLILSSFSLFRSSRSSPASASLAGSGHPRTTPPKIASLQSPM) directs the protein to the chloroplast. Residues 21 to 32 (SSPASASLAGSG) are compositionally biased toward low complexity. Residues 21-47 (SSPASASLAGSGHPRTTPPKIASLQSP) form a disordered region. Residues D547, D551, N691, and E699 each coordinate Mg(2+). Residues 547-551 (DDLFD) carry the DDXXD motif motif.

It belongs to the terpene synthase family. Mg(2+) serves as cofactor.

It localises to the plastid. The protein localises to the chloroplast. It carries out the reaction ent-copalyl diphosphate = ent-atiserene + diphosphate. It functions in the pathway secondary metabolite biosynthesis; terpenoid biosynthesis. In terms of biological role, involved in the biosynthesis of ent-kaurene diterpenoids natural products such as oridonin, miltiradiene, eriocalyxin B and nezukol, known to exhibit antitumor, anti-inflammatory and antibacterial activities. Catalyzes the conversion of ent-copalyl diphosphate (ent-CPP) to ent-atiserene. The polypeptide is Ent-atiserene synthase KSL1, chloroplastic (Isodon japonicus (Scutellaria japonica)).